Reading from the N-terminus, the 447-residue chain is Argininosuccinate synthase (447 aa).

ATP is bound by residues 17-25 (AFSGGLDTS) and A43. Residue Y99 coordinates L-citrulline. 2 residues coordinate ATP: G129 and T131. T131, N135, and D136 together coordinate L-aspartate. An L-citrulline-binding site is contributed by N135. ATP is bound at residue D136. Positions 139 and 192 each coordinate L-citrulline. Residue D194 participates in ATP binding. Residues T201, E203, and E280 each contribute to the L-citrulline site.

This sequence belongs to the argininosuccinate synthase family. Type 2 subfamily. As to quaternary structure, homotetramer.

Its subcellular location is the cytoplasm. It catalyses the reaction L-citrulline + L-aspartate + ATP = 2-(N(omega)-L-arginino)succinate + AMP + diphosphate + H(+). Its pathway is amino-acid biosynthesis; L-arginine biosynthesis; L-arginine from L-ornithine and carbamoyl phosphate: step 2/3. This chain is Argininosuccinate synthase, found in Shigella flexneri serotype 5b (strain 8401).